A 146-amino-acid chain; its full sequence is Snaclec mucetin subunit beta (146 aa).

A signal peptide spans 1–23 (MGRFIFVSFGLLVVFISLSGTEA). 3 cysteine pairs are disulfide-bonded: cysteine 27-cysteine 38, cysteine 55-cysteine 144, and cysteine 121-cysteine 136. A C-type lectin domain is found at 34-145 (YDEHCYQVFQ…CSSKRYVVCK (112 aa)).

The protein belongs to the snaclec family. Dimer and tetramer of heterodimers of alpha and beta subunits ((alphabeta)(2) and (alphabeta)(4)); disulfide-linked. These two multimeric forms are found. Post-translationally, the complex is glycosylated. In terms of tissue distribution, expressed by the venom gland.

The protein localises to the secreted. Functionally, potent platelet activator that acts via GPIb (GP1BA/GP1BB). After activation by the toxin, the receptor is redistributed on platelet surface thanks to cytoskeletal translocation. The indirect activation of integrin alpha-IIb/beta-3 (ITGA2B/ITGB3) also induced by the toxin is downstream the cytoskeletal translocation of GPIb. This Protobothrops mucrosquamatus (Taiwan habu) protein is Snaclec mucetin subunit beta.